A 338-amino-acid polypeptide reads, in one-letter code: 2,3-dihydroxybenzoate decarboxylase (338 aa).

Cysteine 251 is an active-site residue.

Belongs to the metallo-dependent hydrolases superfamily. Homotetramer.

It catalyses the reaction 2,3-dihydroxybenzoate + H(+) = catechol + CO2. It participates in aromatic compound metabolism; benzoate degradation via hydroxylation. Functionally, has an absolute substrate specificity for 2,3-DHBA. The protein is 2,3-dihydroxybenzoate decarboxylase of Aspergillus oryzae (strain ATCC 42149 / RIB 40) (Yellow koji mold).